Here is a 315-residue protein sequence, read N- to C-terminus: Cytochrome c biogenesis protein CcsA (315 aa).

7 helical membrane passes run 14–34 (VVSLGLAAFLFLLIALPISFW), 72–92 (ISNLYESLCFLTWGCTLAQLF), 101–121 (IVSAVATPVSLLSIGFASFVL), 146–166 (VIMCSYAALLIGSILSFGVFL), 221–241 (SITAGFLLLTVGLISGAVWAN), 255–272 (TWALICWLVYAAYLHTRL), and 282–302 (AILAIAGFFVIIVCYIGVNLL).

This sequence belongs to the CcmF/CycK/Ccl1/NrfE/CcsA family. As to quaternary structure, may interact with ccs1.

It is found in the cellular thylakoid membrane. Required during biogenesis of c-type cytochromes (cytochrome c6 and cytochrome f) at the step of heme attachment. The chain is Cytochrome c biogenesis protein CcsA from Prochlorococcus marinus (strain NATL1A).